Here is a 310-residue protein sequence, read N- to C-terminus: tRNA methyltransferase 10 homolog B (310 aa).

Residues 55–94 (RKQRNWERRLEVKKSKRKEEKLRKKLNRQDKDVSDAQLSK) are a coiled coil. Positions 101–298 (TKERLEGARA…AGIPPGKGFV (198 aa)) constitute an SAM-dependent MTase TRM10-type domain.

The protein belongs to the class IV-like SAM-binding methyltransferase superfamily. TRM10 family.

The catalysed reaction is guanosine(9) in tRNA + S-adenosyl-L-methionine = N(1)-methylguanosine(9) in tRNA + S-adenosyl-L-homocysteine + H(+). In terms of biological role, S-adenosyl-L-methionine-dependent guanine N(1)-methyltransferase that catalyzes the formation of N(1)-methylguanine at position 9 (m1G9) in tRNAs. Probably not able to catalyze formation of N(1)-methyladenine at position 9 (m1A9) in tRNAs. The polypeptide is tRNA methyltransferase 10 homolog B (trmt10b) (Danio rerio (Zebrafish)).